The chain runs to 322 residues: MIVFATAPIQTERPRLPQDLFGAIADLKRELNAVILAHYYQEPDIQDVADYIGDSLGLSQQAASTNAEVIVFAGVHFMAETAKILNPDKQVLLPDLEAGCSLAESCPPANFAEFKAAHRNHLVISYINCTAEIKAMSDIICTSSNAVKIVRQIPPEQPIIFAPDRNLGRYVMAQTGREMVLWQGSCIVHETFSEKKIIQLQLQHPEAEVIAHPECEAAVLNRARFIGSTTALLNYVQKSVSPAFIVATEPGIIHQMQRQNPDKLYIPAPPFNNCNCNECPFMRLNTLEKLYWAMRRRAPEVTVPETIRLQALRPIQRMLEMS.

The iminosuccinate site is built by H38 and S55. C100 serves as a coordination point for [4Fe-4S] cluster. Iminosuccinate is bound by residues 126-128 and S143; that span reads YIN. C186 provides a ligand contact to [4Fe-4S] cluster. Iminosuccinate-binding positions include 212–214 and T229; that span reads HPE. Residue C279 participates in [4Fe-4S] cluster binding.

The protein belongs to the quinolinate synthase family. Type 2 subfamily. [4Fe-4S] cluster serves as cofactor.

It is found in the cytoplasm. It catalyses the reaction iminosuccinate + dihydroxyacetone phosphate = quinolinate + phosphate + 2 H2O + H(+). It participates in cofactor biosynthesis; NAD(+) biosynthesis; quinolinate from iminoaspartate: step 1/1. Functionally, catalyzes the condensation of iminoaspartate with dihydroxyacetone phosphate to form quinolinate. This is Quinolinate synthase from Cyanothece sp. (strain PCC 7425 / ATCC 29141).